Reading from the N-terminus, the 735-residue chain is Translation initiation factor IF-2, chloroplastic (735 aa).

One can recognise a tr-type G domain in the interval 239–411 (RRAPIVTILG…ILLMADIENY (173 aa)). Positions 248 to 255 (GHVDHGKT) are G1. 248-255 (GHVDHGKT) lines the GTP pocket. The interval 273–277 (GITQK) is G2. A G3 region spans residues 298 to 301 (DTPG). Residues 298 to 302 (DTPGH) and 352 to 355 (NKID) each bind GTP. Residues 352–355 (NKID) are G4. The interval 388 to 390 (SAS) is G5.

It belongs to the TRAFAC class translation factor GTPase superfamily. Classic translation factor GTPase family. IF-2 subfamily.

The protein resides in the plastid. The protein localises to the chloroplast. In terms of biological role, one of the essential components for the initiation of protein synthesis. Protects formylmethionyl-tRNA from spontaneous hydrolysis and promotes its binding to the 30S ribosomal subunits. Also involved in the hydrolysis of GTP during the formation of the 70S ribosomal complex. The polypeptide is Translation initiation factor IF-2, chloroplastic (infB) (Guillardia theta (Cryptophyte)).